A 562-amino-acid chain; its full sequence is Phosphoglucomutase-1 (562 aa).

An N-acetylmethionine modification is found at Met1. At Lys16 the chain carries N6-acetyllysine. Arg23 contributes to the alpha-D-glucose 1,6-bisphosphate binding site. Thr115 is modified (phosphothreonine). Residue Ser117 coordinates alpha-D-glucose 1,6-bisphosphate. Catalysis depends on Ser117, which acts as the Phosphoserine intermediate. Ser117 serves as a coordination point for Mg(2+). Ser117 and Ser134 each carry phosphoserine. A Phosphothreonine modification is found at Thr185. Ser206 and Ser213 each carry phosphoserine. Positions 288, 290, and 292 each coordinate Mg(2+). Alpha-D-glucose 1,6-bisphosphate contacts are provided by Asp292 and Arg293. Lys349 bears the N6-acetyllysine mark. A Phosphotyrosine modification is found at Tyr353. Residue Thr357 coordinates alpha-D-glucose 1,6-bisphosphate. Ser369 bears the Phosphoserine mark. Glu376, Ser378, and Lys389 together coordinate alpha-D-glucose 1,6-bisphosphate. A Phosphoserine modification is found at Ser378. Lys419 is subject to N6-succinyllysine. A Phosphothreonine; by PAK1 modification is found at Thr467. 3 positions are modified to phosphoserine: Ser477, Ser485, and Ser505. The residue at position 507 (Thr507) is a Phosphothreonine. Phosphoserine is present on residues Ser509 and Ser541.

This sequence belongs to the phosphohexose mutase family. As to quaternary structure, monomer. The cofactor is Mg(2+). Post-translationally, phosphorylation at Thr-467 by PAK1 significantly enhances enzymatic activity.

Its subcellular location is the cytoplasm. The enzyme catalyses alpha-D-glucose 1-phosphate = alpha-D-glucose 6-phosphate. It catalyses the reaction O-phospho-L-seryl-[protein] + alpha-D-glucose 1-phosphate = alpha-D-glucose 1,6-bisphosphate + L-seryl-[protein]. The catalysed reaction is alpha-D-glucose 1,6-bisphosphate + L-seryl-[protein] = O-phospho-L-seryl-[protein] + alpha-D-glucose 6-phosphate. Functionally, catalyzes the reversible isomerization of alpha-D-glucose 1-phosphate to alpha-D-glucose 6-phosphate. The mechanism proceeds via the intermediate compound alpha-D-glucose 1,6-bisphosphate. This enzyme participates in both the breakdown and synthesis of glucose. The sequence is that of Phosphoglucomutase-1 (PGM1) from Macaca fascicularis (Crab-eating macaque).